Here is a 476-residue protein sequence, read N- to C-terminus: Bifunctional protein HldE (476 aa).

Residues 1–319 (MKVSLPAFEK…EALALHHGES (319 aa)) are ribokinase. 195-198 (NMSE) contacts ATP. Asp264 is an active-site residue. The interval 345–476 (MTNGCFDILH…AIIQNIMAKQ (132 aa)) is cytidylyltransferase.

The protein in the N-terminal section; belongs to the carbohydrate kinase PfkB family. It in the C-terminal section; belongs to the cytidylyltransferase family. Homodimer.

It catalyses the reaction D-glycero-beta-D-manno-heptose 7-phosphate + ATP = D-glycero-beta-D-manno-heptose 1,7-bisphosphate + ADP + H(+). It carries out the reaction D-glycero-beta-D-manno-heptose 1-phosphate + ATP + H(+) = ADP-D-glycero-beta-D-manno-heptose + diphosphate. Its pathway is nucleotide-sugar biosynthesis; ADP-L-glycero-beta-D-manno-heptose biosynthesis; ADP-L-glycero-beta-D-manno-heptose from D-glycero-beta-D-manno-heptose 7-phosphate: step 1/4. It functions in the pathway nucleotide-sugar biosynthesis; ADP-L-glycero-beta-D-manno-heptose biosynthesis; ADP-L-glycero-beta-D-manno-heptose from D-glycero-beta-D-manno-heptose 7-phosphate: step 3/4. Catalyzes the phosphorylation of D-glycero-D-manno-heptose 7-phosphate at the C-1 position to selectively form D-glycero-beta-D-manno-heptose-1,7-bisphosphate. Functionally, catalyzes the ADP transfer from ATP to D-glycero-beta-D-manno-heptose 1-phosphate, yielding ADP-D-glycero-beta-D-manno-heptose. This chain is Bifunctional protein HldE, found in Shewanella sp. (strain ANA-3).